A 187-amino-acid chain; its full sequence is T-cell receptor-associated transmembrane adapter 1 (187 aa).

Over 1-7 (MSGSSGC) the chain is Extracellular. The helical; Signal-anchor for type III membrane protein transmembrane segment at 8–28 (PFFLWGLLAFLGLALVISLIF) threads the bilayer. At 29-187 (NISHYVEKQR…LIRAKREPVI (159 aa)) the chain is on the cytoplasmic side. S46 carries the phosphoserine modification. Residue Y80 is modified to Phosphotyrosine. The segment at 80–83 (YEQM) is interaction with PIK3R1. The disordered stretch occupies residues 117–138 (SVKGKRRRPRKQNTNVSDRGKD).

In terms of assembly, homodimer; disulfide-linked. Interacts with CD3Z. When phosphorylated, interacts with PIK3R1. In terms of processing, phosphorylated on tyrosines upon TCR activation. In terms of tissue distribution, present in T-cells (at protein level).

It localises to the cell membrane. Stabilizes the TCR (T-cell antigen receptor)/CD3 complex at the surface of T-cells. This Mus musculus (Mouse) protein is T-cell receptor-associated transmembrane adapter 1 (Trat1).